The sequence spans 173 residues: Shikimate kinase 1 (173 aa).

14-19 serves as a coordination point for ATP; sequence GAGKST. Mg(2+) is bound at residue S18. The substrate site is built by D36, R60, and G82. R120 provides a ligand contact to ATP. R140 is a substrate binding site. Q157 contacts ATP.

It belongs to the shikimate kinase family. In terms of assembly, monomer. The cofactor is Mg(2+).

The protein resides in the cytoplasm. The enzyme catalyses shikimate + ATP = 3-phosphoshikimate + ADP + H(+). Its pathway is metabolic intermediate biosynthesis; chorismate biosynthesis; chorismate from D-erythrose 4-phosphate and phosphoenolpyruvate: step 5/7. In terms of biological role, catalyzes the specific phosphorylation of the 3-hydroxyl group of shikimic acid using ATP as a cosubstrate. The protein is Shikimate kinase 1 of Escherichia fergusonii (strain ATCC 35469 / DSM 13698 / CCUG 18766 / IAM 14443 / JCM 21226 / LMG 7866 / NBRC 102419 / NCTC 12128 / CDC 0568-73).